The chain runs to 844 residues: Beta-mannosidase B (844 aa).

E432 serves as the catalytic Proton donor. N-linked (GlcNAc...) asparagine glycosylation is present at N723.

This sequence belongs to the glycosyl hydrolase 2 family. Beta-mannosidase B subfamily.

The enzyme catalyses Hydrolysis of terminal, non-reducing beta-D-mannose residues in beta-D-mannosides.. It functions in the pathway glycan metabolism; N-glycan degradation. Its function is as follows. Exoglycosidase that cleaves the single beta-linked mannose residue from the non-reducing end of beta-mannosidic oligosaccharides of various complexity and length. Prefers mannobiose over mannotriose and has no activity against polymeric mannan. Is also severely restricted by galactosyl substitutions at the +1 subsite. This is Beta-mannosidase B (mndB) from Aspergillus flavus (strain ATCC 200026 / FGSC A1120 / IAM 13836 / NRRL 3357 / JCM 12722 / SRRC 167).